The chain runs to 395 residues: Protein RIF2 (395 aa).

Interacts with RIF1 and RAP1 C-terminus.

It localises to the nucleus. Its subcellular location is the chromosome. The protein localises to the telomere. Its function is as follows. Involved in transcriptional silencing and telomere length regulation. Its role in telomere length regulation results from either a block in elongation or promoting degradation of the telomere ends. Loss of RIF1 function results in derepression of an HMR silencer, whose ARS consensus element has been deleted, and in the elongation of telomeres. RAP1 may target the binding of RIF1 to silencers and telomeres. The chain is Protein RIF2 (RIF2) from Saccharomyces cerevisiae (strain ATCC 204508 / S288c) (Baker's yeast).